The following is a 342-amino-acid chain: Voltage-gated hydrogen channel 1 (342 aa).

Disordered stretches follow at residues 1 to 20 (MEGDNCNKSRHKSHNMINPN) and 74 to 102 (FNDNNNHERPAPQEQSTQNTMISMQSEQK). Over 1–148 (MEGDNCNKSR…KLRHILHSKP (148 aa)) the chain is Cytoplasmic. Over residues 86-102 (QEQSTQNTMISMQSEQK) the composition is skewed to polar residues. The helical transmembrane segment at 149 to 169 (IHVAIIVLVVLDSFLVVGELL) threads the bilayer. Topologically, residues 170–185 (IDLKVIIVPHGNPAPE) are extracellular. Residues 186–208 (ILHGFSLSILSIFMVEIALKIIA) traverse the membrane as a helical segment. The Cytoplasmic portion of the chain corresponds to 209 to 217 (DHRHFIHHK). The chain crosses the membrane as a helical span at residues 218 to 238 (VEVLDAVVVVISFGVDIALIF). Residues 239–247 (VGESEALAA) are Extracellular-facing. A helical transmembrane segment spans residues 248–268 (IGLLVILRLWRVFRIINGIIV). Topologically, residues 269–342 (TVKTKADDRV…HSTTTASADV (74 aa)) are cytoplasmic. Residues 271–315 (KTKADDRVHEIKKKNSELELQIHNLEEKLSQKEQDMSRLHEILRC) adopt a coiled-coil conformation.

It belongs to the hydrogen channel family. Homodimer.

The protein resides in the membrane. The protein localises to the cell membrane. Less sensitive to zinc ions as compared to the mammalian homologs. Its function is as follows. Mediates the voltage-dependent proton permeability of excitable membranes. Forms a proton-selective channel through which protons may pass in accordance with their electrochemical gradient. This is Voltage-gated hydrogen channel 1 (HVCN1) from Ciona intestinalis (Transparent sea squirt).